Reading from the N-terminus, the 348-residue chain is Uroporphyrinogen decarboxylase (348 aa).

Substrate is bound by residues 28 to 32, Asp78, Tyr154, Thr209, and His325; that span reads RQAGR.

Belongs to the uroporphyrinogen decarboxylase family. As to quaternary structure, homodimer.

The protein resides in the cytoplasm. It carries out the reaction uroporphyrinogen III + 4 H(+) = coproporphyrinogen III + 4 CO2. The protein operates within porphyrin-containing compound metabolism; protoporphyrin-IX biosynthesis; coproporphyrinogen-III from 5-aminolevulinate: step 4/4. Functionally, catalyzes the decarboxylation of four acetate groups of uroporphyrinogen-III to yield coproporphyrinogen-III. The sequence is that of Uroporphyrinogen decarboxylase from Rhodopseudomonas palustris (strain HaA2).